The following is a 277-amino-acid chain: Phosphatidylglycerol--prolipoprotein diacylglyceryl transferase (277 aa).

The next 3 membrane-spanning stretches (helical) occupy residues 17–37 (LAIH…MLLG), 63–83 (ILFL…CLFY), and 101–121 (GGMA…WFAH). Arginine 146 contributes to the a 1,2-diacyl-sn-glycero-3-phospho-(1'-sn-glycerol) binding site. Transmembrane regions (helical) follow at residues 182-202 (SQVY…WLYA), 209-229 (GQVA…AEQF), and 234-254 (AFLG…LPMI).

This sequence belongs to the Lgt family.

It is found in the cell inner membrane. The enzyme catalyses L-cysteinyl-[prolipoprotein] + a 1,2-diacyl-sn-glycero-3-phospho-(1'-sn-glycerol) = an S-1,2-diacyl-sn-glyceryl-L-cysteinyl-[prolipoprotein] + sn-glycerol 1-phosphate + H(+). It functions in the pathway protein modification; lipoprotein biosynthesis (diacylglyceryl transfer). In terms of biological role, catalyzes the transfer of the diacylglyceryl group from phosphatidylglycerol to the sulfhydryl group of the N-terminal cysteine of a prolipoprotein, the first step in the formation of mature lipoproteins. The protein is Phosphatidylglycerol--prolipoprotein diacylglyceryl transferase of Verminephrobacter eiseniae (strain EF01-2).